The chain runs to 121 residues: UPF0102 protein BDI_2565 (121 aa).

This sequence belongs to the UPF0102 family.

This chain is UPF0102 protein BDI_2565, found in Parabacteroides distasonis (strain ATCC 8503 / DSM 20701 / CIP 104284 / JCM 5825 / NCTC 11152).